The chain runs to 43 residues: Protein PsbN (43 aa).

The chain crosses the membrane as a helical span at residues 7 to 24 (VAISISRSLVSFTGYALY).

It belongs to the PsbN family.

It localises to the plastid. The protein resides in the chloroplast thylakoid membrane. In terms of biological role, may play a role in photosystem I and II biogenesis. The sequence is that of Protein PsbN from Ginkgo biloba (Ginkgo).